A 213-amino-acid chain; its full sequence is Large ribosomal subunit protein uL3 (213 aa).

Residues 135–155 are disordered; it reads THGSKNHRLPGSTGAGTTPGR.

The protein belongs to the universal ribosomal protein uL3 family. Part of the 50S ribosomal subunit. Forms a cluster with proteins L14 and L19.

Its function is as follows. One of the primary rRNA binding proteins, it binds directly near the 3'-end of the 23S rRNA, where it nucleates assembly of the 50S subunit. This Synechocystis sp. (strain ATCC 27184 / PCC 6803 / Kazusa) protein is Large ribosomal subunit protein uL3.